The following is a 78-amino-acid chain: UPF0349 protein BH3414 (78 aa).

This sequence belongs to the UPF0349 family.

The chain is UPF0349 protein BH3414 from Halalkalibacterium halodurans (strain ATCC BAA-125 / DSM 18197 / FERM 7344 / JCM 9153 / C-125) (Bacillus halodurans).